Here is a 298-residue protein sequence, read N- to C-terminus: Porphobilinogen deaminase (298 aa).

C239 carries the post-translational modification S-(dipyrrolylmethanemethyl)cysteine.

The protein belongs to the HMBS family. Monomer. Dipyrromethane serves as cofactor.

It catalyses the reaction 4 porphobilinogen + H2O = hydroxymethylbilane + 4 NH4(+). Its pathway is porphyrin-containing compound metabolism; protoporphyrin-IX biosynthesis; coproporphyrinogen-III from 5-aminolevulinate: step 2/4. In terms of biological role, tetrapolymerization of the monopyrrole PBG into the hydroxymethylbilane pre-uroporphyrinogen in several discrete steps. The protein is Porphobilinogen deaminase of Ehrlichia canis (strain Jake).